The sequence spans 411 residues: UDP-N-acetylmuramoylalanine--D-glutamate ligase (411 aa).

Residue 92–98 participates in ATP binding; that stretch reads GTDGKST.

The protein belongs to the MurCDEF family.

The protein resides in the cytoplasm. It carries out the reaction UDP-N-acetyl-alpha-D-muramoyl-L-alanine + D-glutamate + ATP = UDP-N-acetyl-alpha-D-muramoyl-L-alanyl-D-glutamate + ADP + phosphate + H(+). It participates in cell wall biogenesis; peptidoglycan biosynthesis. In terms of biological role, cell wall formation. Catalyzes the addition of glutamate to the nucleotide precursor UDP-N-acetylmuramoyl-L-alanine (UMA). The protein is UDP-N-acetylmuramoylalanine--D-glutamate ligase of Hydrogenobaculum sp. (strain Y04AAS1).